We begin with the raw amino-acid sequence, 323 residues long: Glyoxylate/hydroxypyruvate reductase B (323 aa).

The tract at residues 37 to 62 (AEHGGAGARRRHDRLQQHGGSSAAGE) is disordered. Catalysis depends on residues Arg-236 and Glu-265. The Proton donor role is filled by His-284.

This sequence belongs to the D-isomer specific 2-hydroxyacid dehydrogenase family. GhrB subfamily. As to quaternary structure, homodimer.

The protein resides in the cytoplasm. It catalyses the reaction glycolate + NADP(+) = glyoxylate + NADPH + H(+). It carries out the reaction (R)-glycerate + NAD(+) = 3-hydroxypyruvate + NADH + H(+). The enzyme catalyses (R)-glycerate + NADP(+) = 3-hydroxypyruvate + NADPH + H(+). Its function is as follows. Catalyzes the NADPH-dependent reduction of glyoxylate and hydroxypyruvate into glycolate and glycerate, respectively. The chain is Glyoxylate/hydroxypyruvate reductase B (tkrA) from Enterobacter agglomerans (Erwinia herbicola).